A 494-amino-acid chain; its full sequence is Ribose import ATP-binding protein RbsA (494 aa).

2 ABC transporter domains span residues 3-240 (IEMK…VGRS) and 250-494 (SQIS…TGGE). An ATP-binding site is contributed by 35 to 42 (GENGAGKS).

The protein belongs to the ABC transporter superfamily. Ribose importer (TC 3.A.1.2.1) family. The complex is composed of an ATP-binding protein (RbsA), two transmembrane proteins (RbsC) and a solute-binding protein (RbsB).

The protein resides in the cell membrane. The catalysed reaction is D-ribose(out) + ATP + H2O = D-ribose(in) + ADP + phosphate + H(+). Functionally, part of the ABC transporter complex RbsABC involved in ribose import. Responsible for energy coupling to the transport system. The polypeptide is Ribose import ATP-binding protein RbsA (Bacillus cereus (strain ZK / E33L)).